The primary structure comprises 680 residues: Heterokaryon incompatibility protein 6, OR allele (680 aa).

Functionally, involved in the non-self-recognition during asexual growth of N.crassa. This process involves restriction of heterokaryon formation via genetic differences at 11 het loci, including mating type. In Neurospora crassa (strain ATCC 24698 / 74-OR23-1A / CBS 708.71 / DSM 1257 / FGSC 987), this protein is Heterokaryon incompatibility protein 6, OR allele (het-6).